The following is a 603-amino-acid chain: MEPTTFPSWADVAPRLVAVAAGREPADMIIRNGTWINVHTREALPGHSIAIAEGRIAFVGPDASHCSGPDTRIIEANGRYMIPGLCDGHMHIESGMLTPAEFAAAVIPHGTTTMFTDPHEIANVLGLAGVRMMHDEALMQPVNIFTQMPSCAPSAPGLETTGYEITPEDVAEAMTWPGIIGLGEMMNFPGVTNADPKMLAEIAATQRAGKTVGGHYASPDLGPAFAAYVAGGPADDHEGTCEADAIARVRQGMRSMMRLGSAWYDVETQITAVTEKGLDPRNFILCTDDCHSATLVNDGHMNRVVRHAIACGCDPLIALQMATINTATHFGLERELGSTAPGRRADVILTSDLRDLPIELVIARGQVVAENGKIAVDCPHYDWPDTARGTVHLGHALSARDFEIAAPTGANRVRANVIGVVENQAPTKALKAELPVREGLVETAEHPDDVCQIALVERHRATGGVTNAFVSGFGYQGRMAMASTVAHDSHHMIVVGTDREQMALAANRLAEVGGGITIWRDGQELALVELPIAGLMSDSPAAEVAAKAQAMVEAMAACGCTLNNAYMQHSLLALVVIPELRISDLGLIDVRSFERIDLLEPLA.

This sequence belongs to the metallo-dependent hydrolases superfamily. Adenine deaminase family. It depends on Mn(2+) as a cofactor.

The enzyme catalyses adenine + H2O + H(+) = hypoxanthine + NH4(+). The protein is Adenine deaminase of Ruegeria pomeroyi (strain ATCC 700808 / DSM 15171 / DSS-3) (Silicibacter pomeroyi).